The chain runs to 90 residues: Small ribosomal subunit protein bS18B (90 aa).

It belongs to the bacterial ribosomal protein bS18 family. As to quaternary structure, part of the 30S ribosomal subunit. Forms a tight heterodimer with protein bS6.

Functionally, binds as a heterodimer with protein bS6 to the central domain of the 16S rRNA, where it helps stabilize the platform of the 30S subunit. The chain is Small ribosomal subunit protein bS18B from Roseiflexus sp. (strain RS-1).